The primary structure comprises 162 residues: Caveolin-2 (162 aa).

Residues methionine 1–lysine 86 lie on the Cytoplasmic side of the membrane. Tyrosine 19 bears the Phosphotyrosine; by SRC mark. Phosphoserine occurs at positions 20 and 23. A Phosphotyrosine; by SRC modification is found at tyrosine 27. Residues phenylalanine 87–leucine 107 constitute an intramembrane region (helical). Topologically, residues serine 108–aspartate 162 are cytoplasmic.

This sequence belongs to the caveolin family. As to quaternary structure, monomer or homodimer. Interacts with CAV1; the interaction forms a stable heterooligomeric complex that is required for targeting to lipid rafts and for caveolae formation. Tyrosine phosphorylated forms do not form heterooligomers with the Tyr-19-phosphorylated form existing as a monomer or dimer, and the Tyr-27-form as a monomer only. Interacts (tyrosine phosphorylated form) with the SH2 domain-containing proteins, RASA1, NCK1 and SRC. Interacts (tyrosine phosphorylated form) with INSR, the interaction (Tyr-27-phosphorylated form) is increased on insulin stimulation. Interacts (Tyr-19 phosphorylated form) with MAPK1 (phosphorylated form); the interaction, promoted by insulin, leads to nuclear location and MAPK1 activation. Interacts with STAT3; the interaction is increased on insulin-induced tyrosine phosphorylation leading to STAT activation. Phosphorylated on serine and tyrosine residues. CAV1 promotes phosphorylation on Ser-23 which then targets the complex to the plasma membrane, lipid rafts and caveolae. Phosphorylation on both Tyr-19 and Tyr-27 is required for insulin-induced 'Ser-727' phosphorylation of STAT3 and its activation. Phosphorylation on Tyr-19 is required for insulin-induced phosphorylation of MAPK1 and DNA binding of STAT3. Tyrosine phosphorylation is induced by both EGF and insulin.

The protein localises to the nucleus. The protein resides in the cytoplasm. It is found in the golgi apparatus membrane. Its subcellular location is the cell membrane. It localises to the membrane. The protein localises to the caveola. Functionally, may act as a scaffolding protein within caveolar membranes. Interacts directly with G-protein alpha subunits and can functionally regulate their activity. Acts as an accessory protein in conjunction with CAV1 in targeting to lipid rafts and driving caveolae formation. Positive regulator of cellular mitogenesis of the MAPK signaling pathway. Required for the insulin-stimulated nuclear translocation and activation of MAPK1 and STAT3, and the subsequent regulation of cell cycle progression. In Rhinolophus ferrumequinum (Greater horseshoe bat), this protein is Caveolin-2 (CAV2).